The sequence spans 446 residues: Alpha-1,6-mannosyl-glycoprotein 2-beta-N-acetylglucosaminyltransferase (446 aa).

Residues 1-9 (MRFRIYKRK) are Cytoplasmic-facing. Residues 10–29 (VLILTFVVAACGFVLWSSNG) traverse the membrane as a helical; Signal-anchor for type II membrane protein segment. Over 30-446 (RQRKNEALAP…ELCKSYRRLQ (417 aa)) the chain is Lumenal. N-linked (GlcNAc...) asparagine glycosylation is found at Asn-69 and Asn-86. Substrate-binding positions include 123–127 (QVHNR) and Asp-154. The cysteines at positions 196 and 210 are disulfide-linked. 229–233 (QTKHH) serves as a coordination point for substrate. Asp-261 provides a ligand contact to Mn(2+). The cysteines at positions 283 and 286 are disulfide-linked. A substrate-binding site is contributed by Arg-298. 3 cysteine pairs are disulfide-bonded: Cys-334/Cys-357, Cys-339/Cys-439, and Cys-378/Cys-386. His-374 contacts Mn(2+).

It belongs to the glycosyltransferase 16 (GT16) protein family. As to quaternary structure, homodimer. The cofactor is Mn(2+).

It is found in the golgi apparatus membrane. The catalysed reaction is an N(4)-{beta-D-GlcNAc-(1-&gt;2)-alpha-D-Man-(1-&gt;3)-[alpha-D-Man-(1-&gt;6)]-beta-D-Man-(1-&gt;4)-beta-D-GlcNAc-(1-&gt;4)-beta-D-GlcNAc}-L-asparaginyl-[protein] + UDP-N-acetyl-alpha-D-glucosamine = N(4)-{beta-D-GlcNAc-(1-&gt;2)-alpha-D-Man-(1-&gt;3)-[beta-D-GlcNAc-(1-&gt;2)-alpha-D-Man-(1-&gt;6)]-beta-D-Man-(1-&gt;4)-beta-D-GlcNAc-(1-&gt;4)-beta-D-GlcNAc}-L-asparaginyl-[protein] + UDP + H(+). It functions in the pathway protein modification; protein glycosylation. Its function is as follows. Plays an essential role in protein N-glycosylation. Catalyzes the transfer of N-acetylglucosamine (GlcNAc) onto the free terminal mannose moiety in the core structure of the nascent N-linked glycan chain, giving rise to the second branch in complex glycans. The chain is Alpha-1,6-mannosyl-glycoprotein 2-beta-N-acetylglucosaminyltransferase (MGAT2) from Sus scrofa (Pig).